The primary structure comprises 178 residues: Large ribosomal subunit protein uL5 (178 aa).

It belongs to the universal ribosomal protein uL5 family. Part of the 50S ribosomal subunit; part of the 5S rRNA/L5/L18/L25 subcomplex. Contacts the 5S rRNA and the P site tRNA. Forms a bridge to the 30S subunit in the 70S ribosome.

Functionally, this is one of the proteins that bind and probably mediate the attachment of the 5S RNA into the large ribosomal subunit, where it forms part of the central protuberance. In the 70S ribosome it contacts protein S13 of the 30S subunit (bridge B1b), connecting the 2 subunits; this bridge is implicated in subunit movement. Contacts the P site tRNA; the 5S rRNA and some of its associated proteins might help stabilize positioning of ribosome-bound tRNAs. The sequence is that of Large ribosomal subunit protein uL5 from Psychrobacter cryohalolentis (strain ATCC BAA-1226 / DSM 17306 / VKM B-2378 / K5).